The sequence spans 185 residues: Superoxide dismutase [Cu-Zn] (185 aa).

A signal peptide spans 1-18; it reads MTAFYKLCGMSMLSLVLA. Cu cation is bound by residues H85, H87, and H102. An intrachain disulfide couples C92 to C180. Zn(2+) contacts are provided by H102, H111, H120, and D123. Position 158 (H158) interacts with Cu cation.

Belongs to the Cu-Zn superoxide dismutase family. Homodimer. It depends on Cu cation as a cofactor. Zn(2+) is required as a cofactor.

It localises to the periplasm. It carries out the reaction 2 superoxide + 2 H(+) = H2O2 + O2. Functionally, destroys radicals which are normally produced within the cells and which are toxic to biological systems. In Francisella tularensis subsp. holarctica (strain LVS), this protein is Superoxide dismutase [Cu-Zn] (sodC).